Consider the following 30-residue polypeptide: U5-ctenitoxin-Pk1b (30 aa).

2 disulfide bridges follow: C6–C23 and C13–C29.

It belongs to the neurotoxin 04 (omega-agtx) family. 02 (Tx1) subfamily. Expressed by the venom gland.

Its subcellular location is the secreted. In terms of biological role, lethal neurotoxin. Causes spastic paralysis and death in mice in 4-6 minutes after intracerebroventricular injection at dose levels of 1.5 ug per mouse. This is U5-ctenitoxin-Pk1b from Phoneutria keyserlingi (Brazilian wandering spider).